The primary structure comprises 297 residues: Phosphoribosylaminoimidazole-succinocarboxamide synthase (297 aa).

Belongs to the SAICAR synthetase family.

The enzyme catalyses 5-amino-1-(5-phospho-D-ribosyl)imidazole-4-carboxylate + L-aspartate + ATP = (2S)-2-[5-amino-1-(5-phospho-beta-D-ribosyl)imidazole-4-carboxamido]succinate + ADP + phosphate + 2 H(+). It participates in purine metabolism; IMP biosynthesis via de novo pathway; 5-amino-1-(5-phospho-D-ribosyl)imidazole-4-carboxamide from 5-amino-1-(5-phospho-D-ribosyl)imidazole-4-carboxylate: step 1/2. The polypeptide is Phosphoribosylaminoimidazole-succinocarboxamide synthase (Mycobacterium ulcerans (strain Agy99)).